Here is a 291-residue protein sequence, read N- to C-terminus: Bifunctional protein FolD (291 aa).

Residues 168–170 (GRG), T195, and I236 each bind NADP(+).

This sequence belongs to the tetrahydrofolate dehydrogenase/cyclohydrolase family. As to quaternary structure, homodimer.

The catalysed reaction is (6R)-5,10-methylene-5,6,7,8-tetrahydrofolate + NADP(+) = (6R)-5,10-methenyltetrahydrofolate + NADPH. It carries out the reaction (6R)-5,10-methenyltetrahydrofolate + H2O = (6R)-10-formyltetrahydrofolate + H(+). The protein operates within one-carbon metabolism; tetrahydrofolate interconversion. Catalyzes the oxidation of 5,10-methylenetetrahydrofolate to 5,10-methenyltetrahydrofolate and then the hydrolysis of 5,10-methenyltetrahydrofolate to 10-formyltetrahydrofolate. This is Bifunctional protein FolD from Bifidobacterium longum subsp. infantis (strain ATCC 15697 / DSM 20088 / JCM 1222 / NCTC 11817 / S12).